The chain runs to 676 residues: DNA ligase (676 aa).

NAD(+) contacts are provided by residues 35–39 (DNEYD), 84–85 (SL), and E115. The active-site N6-AMP-lysine intermediate is the K117. Residues R138, E177, K294, and K318 each coordinate NAD(+). Residues C412, C415, C430, and C436 each coordinate Zn(2+). The region spanning 595 to 676 (PTRQPLNGES…FLAFLAQYSA (82 aa)) is the BRCT domain.

The protein belongs to the NAD-dependent DNA ligase family. LigA subfamily. Requires Mg(2+) as cofactor. Mn(2+) is required as a cofactor.

The enzyme catalyses NAD(+) + (deoxyribonucleotide)n-3'-hydroxyl + 5'-phospho-(deoxyribonucleotide)m = (deoxyribonucleotide)n+m + AMP + beta-nicotinamide D-nucleotide.. Its function is as follows. DNA ligase that catalyzes the formation of phosphodiester linkages between 5'-phosphoryl and 3'-hydroxyl groups in double-stranded DNA using NAD as a coenzyme and as the energy source for the reaction. It is essential for DNA replication and repair of damaged DNA. The protein is DNA ligase of Acinetobacter baylyi (strain ATCC 33305 / BD413 / ADP1).